A 233-amino-acid polypeptide reads, in one-letter code: C-type lectin domain family 2 member D6 (233 aa).

Residues 1-45 (MPSSAHLQDSPPLLSRTLTQNEGQTSLRQSSSCGPSATSASESLS) are disordered. At 1–73 (MPSSAHLQDS…GIILPESPAK (73 aa)) the chain is on the cytoplasmic side. Polar residues predominate over residues 16-29 (RTLTQNEGQTSLRQ). Low complexity predominate over residues 30–43 (SSSCGPSATSASES). Residues 74–94 (LLCCCAVIVVLSVAVVALSVA) traverse the membrane as a helical; Signal-anchor for type II membrane protein segment. Residues 95-233 (LSVKKTPQIS…KLNSYTSQCQ (139 aa)) are Extracellular-facing. Positions 119-230 (VGNKCYYFNE…ICSKLNSYTS (112 aa)) constitute a C-type lectin domain. N-linked (GlcNAc...) asparagine glycosylation is present at Asn132.

The protein localises to the cell membrane. Functionally, lectin-type cell surface receptor. The chain is C-type lectin domain family 2 member D6 (Clec2d6) from Rattus norvegicus (Rat).